A 334-amino-acid chain; its full sequence is GTP 3',8-cyclase (334 aa).

The Radical SAM core domain occupies 11-236; the sequence is GFNRKIDYLR…ESTESSQGPA (226 aa). Residue arginine 20 participates in GTP binding. [4Fe-4S] cluster is bound by residues cysteine 27 and cysteine 31. Tyrosine 33 lines the S-adenosyl-L-methionine pocket. Residue cysteine 34 coordinates [4Fe-4S] cluster. GTP is bound at residue arginine 69. Glycine 73 is a binding site for S-adenosyl-L-methionine. GTP is bound at residue threonine 100. Serine 124 contacts S-adenosyl-L-methionine. Lysine 161 serves as a coordination point for GTP. Methionine 195 serves as a coordination point for S-adenosyl-L-methionine. 2 residues coordinate [4Fe-4S] cluster: cysteine 260 and cysteine 263. A GTP-binding site is contributed by 265-267; it reads RVR. Residue cysteine 277 participates in [4Fe-4S] cluster binding.

The protein belongs to the radical SAM superfamily. MoaA family. Monomer and homodimer. [4Fe-4S] cluster is required as a cofactor.

The catalysed reaction is GTP + AH2 + S-adenosyl-L-methionine = (8S)-3',8-cyclo-7,8-dihydroguanosine 5'-triphosphate + 5'-deoxyadenosine + L-methionine + A + H(+). The protein operates within cofactor biosynthesis; molybdopterin biosynthesis. In terms of biological role, catalyzes the cyclization of GTP to (8S)-3',8-cyclo-7,8-dihydroguanosine 5'-triphosphate. This is GTP 3',8-cyclase from Pseudomonas putida (strain GB-1).